Consider the following 248-residue polypeptide: Probable septum site-determining protein MinC (248 aa).

Residues Gly94–Ile126 are disordered.

It belongs to the MinC family. In terms of assembly, interacts with MinD and FtsZ.

Cell division inhibitor that blocks the formation of polar Z ring septums. Rapidly oscillates between the poles of the cell to destabilize FtsZ filaments that have formed before they mature into polar Z rings. Prevents FtsZ polymerization. This chain is Probable septum site-determining protein MinC, found in Brucella suis biovar 1 (strain 1330).